A 717-amino-acid polypeptide reads, in one-letter code: Adhesion cell surface protein MAD1 (717 aa).

A signal peptide spans 1 to 19 (MKSALSVVVAAAGVQQASA). Low complexity-rich tracts occupy residues 237–254 (TPVTTLQTYTTPSQQTTT) and 262–274 (SKETTTSAQQTTP). Disordered stretches follow at residues 237-392 (TPVT…ATTT) and 451-506 (RTQS…TPPC). 8 tandem repeats follow at residues 275–286 (GKETTPAQQTTP), 287–298 (SKETTPVQQTTS), 299–310 (GKETTPAQQTTP), 311–328 (GKETTSSQETTSAHQTTP), 329–340 (GKETTPAQQTTP), 341–352 (GKETTPAQQTTP), 353–364 (GKETTPAQQTTP), and 365–376 (GKETTPAQQTTP). The span at 275–366 (GKETTPAQQT…TPAQQTTPGK (92 aa)) shows a compositional bias: polar residues. Low complexity-rich tracts occupy residues 368–392 (TTPAQQTTPGQQTTPSQPTTAATTT) and 484–503 (QPTGEKPNPVTSQPPQSTQT). The CFEM domain maps to 481-595 (TPEQPTGEKP…TQIITVTGTP (115 aa)). 3 disulfide bridges follow: C513-C546, C524-C532, and C534-C568. A heme-binding site is contributed by D529. N614 is a glycosylation site (N-linked (GlcNAc...) asparagine). Residues 632–690 (PTPTGGVPNQPPATASVPAGQNPPPVTGQNPPPAVTDQSPPPAITTGTGGVIPPKPTGS) form a disordered region. Residues 652–674 (QNPPPVTGQNPPPAVTDQSPPPA) are compositionally biased toward pro residues. The GPI-anchor amidated alanine moiety is linked to residue A695. Residues 696–717 (GSGRVGAGLGMVLAVAAFVAAL) constitute a propeptide, removed in mature form.

The protein belongs to the RBT5 family. The GPI-anchor is attached to the protein in the endoplasmic reticulum and serves to target the protein to the cell surface. There, the glucosamine-inositol phospholipid moiety is cleaved off and the GPI-modified mannoprotein is covalently attached via its lipidless GPI glycan remnant to the 1,6-beta-glucan of the outer cell wall layer.

The protein resides in the secreted. Its subcellular location is the cell wall. It localises to the cell membrane. Its function is as follows. Cell surface adhesion protein that plays a key role in virulence by allowing adherence to the insect host surface. Required to orientate the cytoskeleton and stimulate the expression of genes involved in the cell cycle. Is also involved in achieving the septin hourglass shape and subsequent separation of cells. This Metarhizium anisopliae (Entomophthora anisopliae) protein is Adhesion cell surface protein MAD1.